The sequence spans 465 residues: Anthocyanidin 3-O-glucosyltransferase 2 (465 aa).

His-22 serves as the catalytic Proton acceptor. His-22 and Gln-87 together coordinate an anthocyanidin. Catalysis depends on Asp-122, which acts as the Charge relay. UDP-alpha-D-glucose is bound at residue Thr-145. Residue His-154 coordinates an anthocyanidin. Positions 345, 347, 362, 365, 366, 367, and 370 each coordinate UDP-alpha-D-glucose. Residue Gly-385 coordinates an anthocyanidin. Positions 386 and 387 each coordinate UDP-alpha-D-glucose.

This sequence belongs to the UDP-glycosyltransferase family. As to expression, highest expression detected in fruit, with very low levels detected in petal and leaf.

It catalyses the reaction an anthocyanidin + UDP-alpha-D-glucose + H(+) = an anthocyanidin 3-O-beta-D-glucoside + UDP. The catalysed reaction is pelargonidin + UDP-alpha-D-glucose = pelargonidin 3-O-beta-D-glucoside + UDP. It carries out the reaction cyanidin + UDP-alpha-D-glucose = cyanidin 3-O-beta-D-glucoside + UDP + H(+). The protein operates within pigment biosynthesis; anthocyanin biosynthesis. Functionally, in the presence of other necessary color factors, this glycosylation reaction allows the accumulation of anthocyanin pigments. Anthocyanidins are the preferred substrates, while flavonols are only a minor substrate in vitro. This Fragaria ananassa (Strawberry) protein is Anthocyanidin 3-O-glucosyltransferase 2.